Reading from the N-terminus, the 344-residue chain is Sulfate/thiosulfate import ATP-binding protein CysA (344 aa).

One can recognise an ABC transporter domain in the interval 3–233 (ILIDNVSKNF…PESAFVMSFL (231 aa)). Position 35–42 (35–42 (GPSGCGKS)) interacts with ATP.

This sequence belongs to the ABC transporter superfamily. Sulfate/tungstate importer (TC 3.A.1.6) family. The complex is composed of two ATP-binding proteins (CysA), two transmembrane proteins (CysT and CysW) and a solute-binding protein (CysP).

Its subcellular location is the cell inner membrane. The enzyme catalyses sulfate(out) + ATP + H2O = sulfate(in) + ADP + phosphate + H(+). It carries out the reaction thiosulfate(out) + ATP + H2O = thiosulfate(in) + ADP + phosphate + H(+). Functionally, part of the ABC transporter complex CysAWTP involved in sulfate/thiosulfate import. Responsible for energy coupling to the transport system. The chain is Sulfate/thiosulfate import ATP-binding protein CysA from Gloeobacter violaceus (strain ATCC 29082 / PCC 7421).